A 218-amino-acid chain; its full sequence is Small ribosomal subunit protein mS34 (218 aa).

A disordered region spans residues 178 to 218 (RQKNGDPSTEEPMLSLERIRTDPWDYPENQEAKKKTKGTAV).

The protein belongs to the mitochondrion-specific ribosomal protein mS34 family. In terms of assembly, component of the mitochondrial ribosome small subunit (28S) which comprises a 12S rRNA and about 30 distinct proteins.

The protein resides in the mitochondrion. In terms of biological role, required for mitochondrial translation, plays a role in maintaining the stability of the small ribosomal subunit and the 12S rRNA that are required for mitoribosome formation. The chain is Small ribosomal subunit protein mS34 from Bos taurus (Bovine).